A 371-amino-acid polypeptide reads, in one-letter code: Ubiquitin receptor RAD23b (371 aa).

In terms of domain architecture, Ubiquitin-like spans 1 to 79 (MKLTVKTLKG…LVVMLSKSKS (79 aa)). Over residues 79 to 117 (SGGSAGQASVQTSSVSQPVSATTSSTKPAAPSTTQSSPV) the composition is skewed to low complexity. Positions 79 to 142 (SGGSAGQASV…DTYGQAASTL (64 aa)) are disordered. A compositionally biased stretch (polar residues) spans 128-142 (PAAQTDTYGQAASTL). Positions 146-189 (SSLEQMVQQIMEMGGGSWDKETVTRALRAAYNNPERAVDYLYSG) constitute a UBA 1 domain. The STI1 domain maps to 242–285 (GTLEFLRNNDQFQQLRTMVHSNPQILQPMLQELGKQNPQLLRLI). The UBA 2 domain maps to 325–365 (PAEQEAIQRLEAMGFDRALVIEAFLACDRNEELAANYLLEN).

Belongs to the RAD23 family. As to quaternary structure, interacts with 'Lys-48'-linked polyubiquitin chains. Interacts with RPN10 via its ubiquitin-like domain. Interacts with UBQ1, UBQ2, UBQ5, UBQ7, UBQ10, UBQ11 and IAA16. Binds to RAD4. In terms of tissue distribution, widely expressed in the whole plant.

It is found in the nucleus. It localises to the cytoplasm. Its function is as follows. May be involved in nucleotide excision repair. Binds and presumably selects ubiquitin-conjugates for destruction. Prefers multiubiquitin chains rather than single ubiquitins, with a binding affinity for 'Lys-48'-linked ubiquitin chains. Acts as a ubiquitin receptor that associates with the 26S proteasomal docking subunit RPN10 for the indirect recognition of ubiquitinated substrates of ubiquitin/26S proteasome-mediated proteolysis (UPP). Involved in UV tolerance in both roots and hypocotyls, specifically in dark conditions. In Arabidopsis thaliana (Mouse-ear cress), this protein is Ubiquitin receptor RAD23b.